The primary structure comprises 311 residues: Methionyl-tRNA formyltransferase (311 aa).

112–115 (SLLP) provides a ligand contact to (6S)-5,6,7,8-tetrahydrofolate.

The protein belongs to the Fmt family.

The catalysed reaction is L-methionyl-tRNA(fMet) + (6R)-10-formyltetrahydrofolate = N-formyl-L-methionyl-tRNA(fMet) + (6S)-5,6,7,8-tetrahydrofolate + H(+). Its function is as follows. Attaches a formyl group to the free amino group of methionyl-tRNA(fMet). The formyl group appears to play a dual role in the initiator identity of N-formylmethionyl-tRNA by promoting its recognition by IF2 and preventing the misappropriation of this tRNA by the elongation apparatus. The sequence is that of Methionyl-tRNA formyltransferase from Rhizobium etli (strain ATCC 51251 / DSM 11541 / JCM 21823 / NBRC 15573 / CFN 42).